The primary structure comprises 167 residues: Endoribonuclease YbeY (167 aa).

3 residues coordinate Zn(2+): His-131, His-135, and His-141.

Belongs to the endoribonuclease YbeY family. The cofactor is Zn(2+).

It is found in the cytoplasm. Its function is as follows. Single strand-specific metallo-endoribonuclease involved in late-stage 70S ribosome quality control and in maturation of the 3' terminus of the 16S rRNA. This is Endoribonuclease YbeY from Rickettsia rickettsii (strain Sheila Smith).